The chain runs to 317 residues: Beta-ketoacyl-[acyl-carrier-protein] synthase III (317 aa).

Active-site residues include Cys112 and His244. Residues 245-249 (QANLR) form an ACP-binding region. Asn274 is a catalytic residue.

It belongs to the thiolase-like superfamily. FabH family. As to quaternary structure, homodimer.

The protein localises to the cytoplasm. The catalysed reaction is malonyl-[ACP] + acetyl-CoA + H(+) = 3-oxobutanoyl-[ACP] + CO2 + CoA. Its pathway is lipid metabolism; fatty acid biosynthesis. In terms of biological role, catalyzes the condensation reaction of fatty acid synthesis by the addition to an acyl acceptor of two carbons from malonyl-ACP. Catalyzes the first condensation reaction which initiates fatty acid synthesis and may therefore play a role in governing the total rate of fatty acid production. Possesses both acetoacetyl-ACP synthase and acetyl transacylase activities. Its substrate specificity determines the biosynthesis of branched-chain and/or straight-chain of fatty acids. The protein is Beta-ketoacyl-[acyl-carrier-protein] synthase III of Aliivibrio fischeri (strain ATCC 700601 / ES114) (Vibrio fischeri).